A 267-amino-acid polypeptide reads, in one-letter code: Glutamate racemase (267 aa).

Substrate is bound by residues 13-14 (DS) and 45-46 (YS). Residue Cys77 is the Proton donor/acceptor of the active site. 78–79 (NT) contributes to the substrate binding site. Catalysis depends on Cys188, which acts as the Proton donor/acceptor. 189–190 (TH) provides a ligand contact to substrate.

Belongs to the aspartate/glutamate racemases family.

It carries out the reaction L-glutamate = D-glutamate. It functions in the pathway cell wall biogenesis; peptidoglycan biosynthesis. Functionally, provides the (R)-glutamate required for cell wall biosynthesis. This chain is Glutamate racemase, found in Histophilus somni (strain 129Pt) (Haemophilus somnus).